The chain runs to 324 residues: Ribosomal RNA small subunit methyltransferase H (324 aa).

S-adenosyl-L-methionine is bound by residues 41 to 43 (GGH), D60, Y87, D111, and Q118.

It belongs to the methyltransferase superfamily. RsmH family.

The protein resides in the cytoplasm. It catalyses the reaction cytidine(1402) in 16S rRNA + S-adenosyl-L-methionine = N(4)-methylcytidine(1402) in 16S rRNA + S-adenosyl-L-homocysteine + H(+). In terms of biological role, specifically methylates the N4 position of cytidine in position 1402 (C1402) of 16S rRNA. The protein is Ribosomal RNA small subunit methyltransferase H of Nocardia farcinica (strain IFM 10152).